Here is a 386-residue protein sequence, read N- to C-terminus: Succinate--CoA ligase [ADP-forming] subunit beta (386 aa).

The ATP-grasp domain occupies 9 to 244 (KDILRQFGVP…LDEEDPAEVE (236 aa)). ATP-binding positions include K46, 53-55 (GRG), E99, A102, and E107. 2 residues coordinate Mg(2+): N199 and D213. Residues N264 and 321–323 (GIM) each bind substrate.

This sequence belongs to the succinate/malate CoA ligase beta subunit family. As to quaternary structure, heterotetramer of two alpha and two beta subunits. The cofactor is Mg(2+).

The catalysed reaction is succinate + ATP + CoA = succinyl-CoA + ADP + phosphate. The enzyme catalyses GTP + succinate + CoA = succinyl-CoA + GDP + phosphate. Its pathway is carbohydrate metabolism; tricarboxylic acid cycle; succinate from succinyl-CoA (ligase route): step 1/1. Succinyl-CoA synthetase functions in the citric acid cycle (TCA), coupling the hydrolysis of succinyl-CoA to the synthesis of either ATP or GTP and thus represents the only step of substrate-level phosphorylation in the TCA. The beta subunit provides nucleotide specificity of the enzyme and binds the substrate succinate, while the binding sites for coenzyme A and phosphate are found in the alpha subunit. This chain is Succinate--CoA ligase [ADP-forming] subunit beta, found in Delftia acidovorans (strain DSM 14801 / SPH-1).